Consider the following 518-residue polypeptide: DNA-binding protein Ikaros (518 aa).

Residues 1-51 (METDEAQDMSQVSGKESPPISDVPDDADEPMPVPEDLSTTTGGQQSVKNER) are disordered. The span at 37 to 47 (LSTTTGGQQSV) shows a compositional bias: polar residues. 4 consecutive C2H2-type zinc fingers follow at residues 117–139 (LKCD…NRSH), 145–167 (FQCN…IKLH), 173–195 (FKCH…LRTH), and 201–224 (HKCG…ERCH). Residues 381–405 (SVSSERDASPSNSCQDSTDTESNNE) form a disordered region. C2H2-type zinc fingers lie at residues 461 to 483 (YKCE…MGCH) and 489 to 513 (FECN…RGEH).

Belongs to the Ikaros C2H2-type zinc-finger protein family. Expressed in embryonic hematopoietic organs such as the bursa of Fabricius, thymus and spleen. In the adult, expressed in spleen, thymus, bursa and peripheral blood leukocytes.

It localises to the nucleus. Binds and activates the enhancer (delta-A element) of the CD3-delta gene. Functions in the specification and the maturation of the T-lymphocyte. Also interacts with a critical control element in the TDT (terminal deoxynucleotidyltransferase) promoter as well as with the promoters for other genes expressed during early stages of B- and T-cell development. Function is isoform-specific and is modulated by dominant-negative inactive isoforms. This is DNA-binding protein Ikaros (IKZF1) from Gallus gallus (Chicken).